The primary structure comprises 211 residues: MRVRKRKGAEEHLENNPHYVISNPEEAKGRWHEIFGNNNPIHIEVGSGKGAFITGMAEQNPDINYIGIDIQLSVLSYALDKVLDSGAKNIKLLLVDGSSLSNYFDTGEVDLMYLNFSDPWPKKKHEKRRLTYKTFLDTYKDILPEQGEIHFKTDNRGLFEYSLASFSQYGMTLKQVWLDLHASDYQQNIMTEYERKFSNKGQVIYRVEARF.

The S-adenosyl-L-methionine site is built by Glu-44, Asp-69, Asp-96, and Asp-118. The active site involves Asp-118. Lys-122 provides a ligand contact to substrate. The tract at residues 124–129 is interaction with RNA; sequence KHEKRR. Substrate is bound by residues Asp-154 and 191–194; that span reads TEYE.

The protein belongs to the class I-like SAM-binding methyltransferase superfamily. TrmB family.

The enzyme catalyses guanosine(46) in tRNA + S-adenosyl-L-methionine = N(7)-methylguanosine(46) in tRNA + S-adenosyl-L-homocysteine. Its pathway is tRNA modification; N(7)-methylguanine-tRNA biosynthesis. Its function is as follows. Catalyzes the formation of N(7)-methylguanine at position 46 (m7G46) in tRNA. The protein is tRNA (guanine-N(7)-)-methyltransferase of Streptococcus agalactiae serotype Ia (strain ATCC 27591 / A909 / CDC SS700).